The primary structure comprises 204 residues: Peptide deformylase (204 aa).

C131 and H174 together coordinate Fe cation. The active site involves E175. H178 lines the Fe cation pocket.

The protein belongs to the polypeptide deformylase family. Fe(2+) serves as cofactor.

It catalyses the reaction N-terminal N-formyl-L-methionyl-[peptide] + H2O = N-terminal L-methionyl-[peptide] + formate. In terms of biological role, removes the formyl group from the N-terminal Met of newly synthesized proteins. Requires at least a dipeptide for an efficient rate of reaction. N-terminal L-methionine is a prerequisite for activity but the enzyme has broad specificity at other positions. The polypeptide is Peptide deformylase (Streptococcus pyogenes serotype M18 (strain MGAS8232)).